The sequence spans 524 residues: Cytochrome P450 monooxygenase patH (524 aa).

Topologically, residues 1-4 (MEPF) are cytoplasmic. The helical transmembrane segment at 5 to 22 (LLLLLVLLPAIVLVRYAF) threads the bilayer. The Lumenal portion of the chain corresponds to 23-524 (TYGHRTSTMP…ADVFSRFTEG (502 aa)). A glycan (N-linked (GlcNAc...) asparagine) is linked at N266. A heme-binding site is contributed by C442.

It belongs to the cytochrome P450 family. Heme serves as cofactor.

It is found in the endoplasmic reticulum membrane. The catalysed reaction is 3-methylphenol + reduced [NADPH--hemoprotein reductase] + O2 = 3-hydroxybenzyl alcohol + oxidized [NADPH--hemoprotein reductase] + H2O + H(+). It participates in mycotoxin biosynthesis; patulin biosynthesis. In terms of biological role, cytochrome P450 monooxygenase; part of the gene cluster that mediates the biosynthesis of patulin, an acetate-derived tetraketide mycotoxin produced by several fungal species that shows antimicrobial properties against several bacteria. PatH catalyzes the conversion of m-cresol into m-hydroxybenzyl alcohol. The pathway begins with the synthesis of 6-methylsalicylic acid by the polyketide synthase (PKS) patK via condensation of acetate and malonate units. The 6-methylsalicylic acid decarboxylase patG then catalyzes the decarboxylation of 6-methylsalicylic acid to yield m-cresol (also known as 3-methylphenol). These first reactions occur in the cytosol. The intermediate m-cresol is then transported into the endoplasmic reticulum where the cytochrome P450 monooxygenase patH converts it to m-hydroxybenzyl alcohol, which is further converted to gentisyl alcohol by the cytochrome P450 monooxygenase patI. The oxidoreductases patJ and patO further convert gentisyl alcohol to isoepoxydon in the vacuole. PatN catalyzes then the transformation of isoepoxydon into phyllostine. The cluster protein patF is responsible for the conversion from phyllostine to neopatulin whereas the alcohol dehydrogenase patD converts neopatulin to E-ascladiol. The steps between isoepoxydon and E-ascladiol occur in the cytosol, and E-ascladiol is probably secreted to the extracellular space by one of the cluster-specific transporters patC or patM. Finally, the secreted patulin synthase patE catalyzes the conversion of E-ascladiol to patulin. The polypeptide is Cytochrome P450 monooxygenase patH (Penicillium expansum (Blue mold rot fungus)).